The following is a 187-amino-acid chain: Biphenyl 2,3-dioxygenase subunit beta (187 aa).

Belongs to the bacterial ring-hydroxylating dioxygenase beta subunit family. In terms of assembly, heterohexamer consisting of three BphA1 subunits and three BphA2 subunits. The multicomponent biphenyl dioxygenase system is composed of a ferredoxin reductase (BphA4), a ferredoxin (BphA3), and a terminal oxygenase (BphA1A2).

The enzyme catalyses biphenyl + NADH + O2 + H(+) = (2R,3S)-3-phenylcyclohexa-3,5-diene-1,2-diol + NAD(+). The protein operates within xenobiotic degradation; biphenyl degradation; 2-hydroxy-2,4-pentadienoate and benzoate from biphenyl: step 1/4. In terms of biological role, part of the oxygenase component of the biphenyl dioxygenase system that catalyzes the stereospecific dihydroxylation of the aromatic ring of biphenyl, yielding a dihydrodiol compound. Is likely involved in biphenyl degradation that allows growth of Rhodococcus sp. strain RHA1 on biphenyl as the sole source of carbon and energy. Can also use naphtalene and 4-chlorobiphenyl (4-CB) as substrates, as well as some polychlorinated biphenyls (PCB) such as 2,2'-dichlorobiphenyl, 2,3-dichlorobiphenyl and 2,5,2'-trichlorobiphenyl. Exhibits weak activity toward dibenzofuran and dibenzo-p-dioxin. Electrons are transferred from NADH to the [2Fe-2S] cluster in BphA1 via FAD of BphA4 and [2Fe-2S] cluster of BphA3. The polypeptide is Biphenyl 2,3-dioxygenase subunit beta (Rhodococcus jostii (strain RHA1)).